Reading from the N-terminus, the 255-residue chain is Thiazole synthase (255 aa).

The active-site Schiff-base intermediate with DXP is the K97. Residues G158, 184-185, and 206-207 each bind 1-deoxy-D-xylulose 5-phosphate; these read AG and NT.

It belongs to the ThiG family. In terms of assembly, homotetramer. Forms heterodimers with either ThiH or ThiS.

It localises to the cytoplasm. It catalyses the reaction [ThiS sulfur-carrier protein]-C-terminal-Gly-aminoethanethioate + 2-iminoacetate + 1-deoxy-D-xylulose 5-phosphate = [ThiS sulfur-carrier protein]-C-terminal Gly-Gly + 2-[(2R,5Z)-2-carboxy-4-methylthiazol-5(2H)-ylidene]ethyl phosphate + 2 H2O + H(+). It functions in the pathway cofactor biosynthesis; thiamine diphosphate biosynthesis. In terms of biological role, catalyzes the rearrangement of 1-deoxy-D-xylulose 5-phosphate (DXP) to produce the thiazole phosphate moiety of thiamine. Sulfur is provided by the thiocarboxylate moiety of the carrier protein ThiS. In vitro, sulfur can be provided by H(2)S. In Acetivibrio thermocellus (strain ATCC 27405 / DSM 1237 / JCM 9322 / NBRC 103400 / NCIMB 10682 / NRRL B-4536 / VPI 7372) (Clostridium thermocellum), this protein is Thiazole synthase.